Reading from the N-terminus, the 360-residue chain is Peptide chain release factor 1 (360 aa).

Glutamine 235 is subject to N5-methylglutamine.

This sequence belongs to the prokaryotic/mitochondrial release factor family. Methylated by PrmC. Methylation increases the termination efficiency of RF1.

It is found in the cytoplasm. In terms of biological role, peptide chain release factor 1 directs the termination of translation in response to the peptide chain termination codons UAG and UAA. In Janthinobacterium sp. (strain Marseille) (Minibacterium massiliensis), this protein is Peptide chain release factor 1.